The following is a 100-amino-acid chain: Urease subunit gamma (100 aa).

Belongs to the urease gamma subunit family. As to quaternary structure, heterotrimer of UreA (gamma), UreB (beta) and UreC (alpha) subunits. Three heterotrimers associate to form the active enzyme.

It is found in the cytoplasm. It carries out the reaction urea + 2 H2O + H(+) = hydrogencarbonate + 2 NH4(+). The protein operates within nitrogen metabolism; urea degradation; CO(2) and NH(3) from urea (urease route): step 1/1. In Acinetobacter baumannii (strain SDF), this protein is Urease subunit gamma.